The following is a 438-amino-acid chain: Argininosuccinate lyase (438 aa).

The protein belongs to the lyase 1 family. Argininosuccinate lyase subfamily.

Its subcellular location is the cytoplasm. The enzyme catalyses 2-(N(omega)-L-arginino)succinate = fumarate + L-arginine. Its pathway is amino-acid biosynthesis; L-arginine biosynthesis; L-arginine from L-ornithine and carbamoyl phosphate: step 3/3. The chain is Argininosuccinate lyase from Clostridium kluyveri (strain NBRC 12016).